The sequence spans 77 residues: Teretoxin Tan15.2 (77 aa).

The first 21 residues, 1 to 21 (MTRLTVVFLAILVLLPLATSN), serve as a signal peptide directing secretion. The propeptide occupies 22–40 (SGADEAPASLSDLLHRTKR).

In terms of processing, contains 4 disulfide bonds. Expressed by the venom duct.

Its subcellular location is the secreted. The chain is Teretoxin Tan15.2 from Terebra anilis (Auger snail).